The sequence spans 66 residues: Putative ankyrin repeat protein RF_pd14 (66 aa).

One copy of the ANK repeat lies at 14–66 (KLNQKLMRAAATGDIEAVQKLVLRGADIYCRDHQGDTALSLAAGSGYLDILDI).

The chain is Putative ankyrin repeat protein RF_pd14 from Rickettsia felis (strain ATCC VR-1525 / URRWXCal2) (Rickettsia azadi).